A 245-amino-acid polypeptide reads, in one-letter code: Adenylate kinase (245 aa).

15-20 provides a ligand contact to ATP; that stretch reads GSGKGT. The tract at residues 35 to 64 is NMP; that stretch reads SSGDLLRDAVSKDTPLSQEIKSYLDQGKLL. Residues Ser36, Arg41, 62–64, 103–106, and Gln110 each bind AMP; these read KLL and GFPR. The interval 143 to 176 is LID; the sequence is SRYICPACQGIYNEQQGFSSCPKCSVELIRRSDD. Residue Arg144 coordinates ATP. The Zn(2+) site is built by Cys147 and Cys150. Residue 153-154 participates in ATP binding; it reads IY. Residues Cys163 and Cys166 each coordinate Zn(2+). AMP-binding residues include Arg173 and Arg184. Ala212 is an ATP binding site.

Belongs to the adenylate kinase family. Monomer.

Its subcellular location is the cytoplasm. It catalyses the reaction AMP + ATP = 2 ADP. The protein operates within purine metabolism; AMP biosynthesis via salvage pathway; AMP from ADP: step 1/1. Functionally, catalyzes the reversible transfer of the terminal phosphate group between ATP and AMP. Plays an important role in cellular energy homeostasis and in adenine nucleotide metabolism. The polypeptide is Adenylate kinase (Chlamydia trachomatis serovar A (strain ATCC VR-571B / DSM 19440 / HAR-13)).